Consider the following 356-residue polypeptide: Probable arabinogalactan endo-beta-1,4-galactanase A (356 aa).

Residues 1–21 (MLGKTVLLPLLVLLCHSLASA) form the signal peptide. The N-linked (GlcNAc...) asparagine glycan is linked to Asn133. Residue Glu157 is the Proton donor of the active site. Glu268 functions as the Nucleophile in the catalytic mechanism.

It belongs to the glycosyl hydrolase 53 family.

It localises to the secreted. The enzyme catalyses The enzyme specifically hydrolyzes (1-&gt;4)-beta-D-galactosidic linkages in type I arabinogalactans.. Its function is as follows. Endogalactanase involved in the degradation of plant cell wall polysaccharides, and more particularly of hairy regions of pectin. The polypeptide is Probable arabinogalactan endo-beta-1,4-galactanase A (galA) (Aspergillus fumigatus (strain CBS 144.89 / FGSC A1163 / CEA10) (Neosartorya fumigata)).